A 160-amino-acid chain; its full sequence is Probable small nuclear ribonucleoprotein-associated protein B (160 aa).

The Sm domain maps to 4-86 (SKNNKMMAHL…IVSMTVDGPP (83 aa)). Positions 80 to 160 (MTVDGPPPRD…YGGPPGGRPF (81 aa)) are disordered. 3 stretches are compositionally biased toward gly residues: residues 99–113 (GGAG…GGRG), 128–143 (APGG…GGPG), and 150–160 (GYGGPPGGRPF).

The protein belongs to the snRNP SmB/SmN family.

Its subcellular location is the nucleus. It localises to the cytoplasm. It is found in the cytosol. In terms of biological role, plays a role in pre-mRNA splicing as a core component of the spliceosomal U1, U2, U4 and U5 small nuclear ribonucleoproteins (snRNPs), the building blocks of the spliceosome. This chain is Probable small nuclear ribonucleoprotein-associated protein B (snr-2), found in Caenorhabditis elegans.